The following is a 107-amino-acid chain: Nucleoid-associated protein BAbS19_I00290 (107 aa).

This sequence belongs to the YbaB/EbfC family. As to quaternary structure, homodimer.

The protein localises to the cytoplasm. It is found in the nucleoid. Functionally, binds to DNA and alters its conformation. May be involved in regulation of gene expression, nucleoid organization and DNA protection. This is Nucleoid-associated protein BAbS19_I00290 from Brucella abortus (strain S19).